The chain runs to 1001 residues: Sarcoplasmic/endoplasmic reticulum calcium ATPase 1 (1001 aa).

The Cytoplasmic portion of the chain corresponds to 1–48 (MEAAHSKSTEECLAYFGVSETTGLTPDQVKRHLEKYGHNELPAEEGKS). The helical transmembrane segment at 49-69 (LWELVIEQFEDLLVRILLLAA) threads the bilayer. The Lumenal portion of the chain corresponds to 70–89 (CISFVLAWFEEGEETITAFV). Residues 90–110 (EPFVILLILIANAIVGVWQER) traverse the membrane as a helical segment. At 111–253 (NAENAIEALK…QDKTPLQQKL (143 aa)) the chain is on the cytoplasmic side. Residues 254-273 (DEFGEQLSKVISLICVAVWL) form a helical membrane-spanning segment. The Lumenal portion of the chain corresponds to 274-295 (INIGHFNDPVHGGSWIRGAIYY). A helical transmembrane segment spans residues 296–313 (FKIAVALAVAAIPEGLPA). Ca(2+) is bound by residues V304, A305, I307, and E309. Topologically, residues 314 to 757 (VITTCLALGT…EEGRAIYNNM (444 aa)) are cytoplasmic. The active-site 4-aspartylphosphate intermediate is the D351. Residues D351 and T353 each coordinate Mg(2+). T353 is an ATP binding site. Phosphothreonine is present on T441. Residues E442, R489, K515, and R560 each contribute to the ATP site. The residue at position 569 (T569) is a Phosphothreonine. S581 is modified (phosphoserine). ATP contacts are provided by T625, G626, D627, R678, and K684. A Mg(2+)-binding site is contributed by D703. Residue N706 participates in ATP binding. A helical membrane pass occupies residues 758-777 (KQFIRYLISSNVGEVVCIFL). Residues N768 and E771 each contribute to the Ca(2+) site. Topologically, residues 778–787 (TAALGLPEAL) are lumenal. A helical transmembrane segment spans residues 788 to 808 (IPVQLLWVNLVTDGLPATALG). Positions 788–808 (IPVQLLWVNLVTDGLPATALG) are interaction with PLN. Ca(2+) is bound by residues N796, T799, and D800. The Cytoplasmic portion of the chain corresponds to 809-828 (FNPPDLDIMDRPPRSPKEPL). Residues 829–851 (ISGWLFFRYMAIGGYVGAATVGA) traverse the membrane as a helical segment. Topologically, residues 852–897 (AAWWFMYAEDGPGVTYHQLTHFMQCTEDHPHFEGLDCEIFEAPEPM) are lumenal. A disulfide bridge connects residues C876 and C888. A helical transmembrane segment spans residues 898-917 (TMALSVLVTIEMCNALNSLS). E908 provides a ligand contact to Ca(2+). The Cytoplasmic portion of the chain corresponds to 918–930 (ENQSLMRMPPWVN). Residues 931–949 (IWLLGSICLSMSLHFLILY) traverse the membrane as a helical segment. The interaction with PLN stretch occupies residues 932-943 (WLLGSICLSMSL). Over 950–964 (VDPLPMIFKLKALDL) the chain is Lumenal. Residues 965–985 (TQWLMVLKISLPVIGLDEILK) traverse the membrane as a helical segment. Residues 986–1001 (FIARNYLEDPEDERRK) lie on the Cytoplasmic side of the membrane.

The protein belongs to the cation transport ATPase (P-type) (TC 3.A.3) family. Type IIA subfamily. In terms of assembly, interacts with sarcolipin (SLN). Interacts with phospholamban (PLN). Interacts with myoregulin (MRLN). Interacts with DWORF. Interacts with VMP1. The cofactor is Mg(2+). In terms of tissue distribution, skeletal muscle (at protein level). Skeletal muscle, fast twitch muscle (type II) fibers.

The protein localises to the endoplasmic reticulum membrane. Its subcellular location is the sarcoplasmic reticulum membrane. The catalysed reaction is Ca(2+)(in) + ATP + H2O = Ca(2+)(out) + ADP + phosphate + H(+). With respect to regulation, inhibited by sarcolipin (SLN) and myoregulin (MRLN). Has also been shown to be reversibly inhibited by phospholamban (PLN) at low calcium concentrations in vitro. Dephosphorylated PLN decreases the apparent affinity of the ATPase for calcium and this inhibition is regulated by the phosphorylation of PLN in vitro. Enhanced by DWORF; DWORF increases activity by displacing sarcolipin (SLN), phospholamban (PLN) and myoregulin (MRLN). Functionally, key regulator of striated muscle performance by acting as the major Ca(2+) ATPase responsible for the reuptake of cytosolic Ca(2+) into the sarcoplasmic reticulum. Catalyzes the hydrolysis of ATP coupled with the translocation of calcium from the cytosol to the sarcoplasmic reticulum lumen. Contributes to calcium sequestration involved in muscular excitation/contraction. This chain is Sarcoplasmic/endoplasmic reticulum calcium ATPase 1 (ATP2A1), found in Oryctolagus cuniculus (Rabbit).